The primary structure comprises 141 residues: ATP synthase epsilon chain (141 aa).

Belongs to the ATPase epsilon chain family. As to quaternary structure, F-type ATPases have 2 components, CF(1) - the catalytic core - and CF(0) - the membrane proton channel. CF(1) has five subunits: alpha(3), beta(3), gamma(1), delta(1), epsilon(1). CF(0) has three main subunits: a, b and c.

It localises to the cell membrane. In terms of biological role, produces ATP from ADP in the presence of a proton gradient across the membrane. The protein is ATP synthase epsilon chain (atpC) of Mycoplasmopsis pulmonis (strain UAB CTIP) (Mycoplasma pulmonis).